A 208-amino-acid chain; its full sequence is Mediator of RNA polymerase II transcription subunit 21 (208 aa).

The tract at residues 52 to 122 is disordered; that stretch reads TKNSTAPPAP…PDSPRTFASR (71 aa). Positions 63–83 are enriched in low complexity; that stretch reads GAPAGSQASPQQQSAQIPGQQ. A compositionally biased stretch (gly residues) spans 84–104; the sequence is QQGGGDAGQTPGAGGGTGGAG. A coiled-coil region spans residues 146–195; sequence GIDSSEAEQERRIKELEKELRSAEEDREQRVRELRKLRKKLENVLGAVEV.

Belongs to the Mediator complex subunit 21 family. As to quaternary structure, component of the Mediator complex.

Its subcellular location is the nucleus. Component of the Mediator complex, a coactivator involved in the regulated transcription of nearly all RNA polymerase II-dependent genes. Mediator functions as a bridge to convey information from gene-specific regulatory proteins to the basal RNA polymerase II transcription machinery. Mediator is recruited to promoters by direct interactions with regulatory proteins and serves as a scaffold for the assembly of a functional preinitiation complex with RNA polymerase II and the general transcription factors. This chain is Mediator of RNA polymerase II transcription subunit 21 (srb7), found in Aspergillus oryzae (strain ATCC 42149 / RIB 40) (Yellow koji mold).